A 228-amino-acid chain; its full sequence is GIVRYTKMKTATNIYIFNLALADALATSTLPFQSAKYLMETWPFGELLCKAVLSIDYYNMFTSIFTLTMMSVDRYIAVCHPVKALDFRTPAKAKLINICIWVLASGVGVPIMVMAVTRPRDGAVVCMLQFPSPSWYWDTVTKICVFLFAFVVPILVITVCYGLMLLRLRSVRLLSGSKEKDRSLRRITRMVLVVVGAFVVCWAPIHIFVIVWTLVDIDRRDPLVVAAL.

A helical transmembrane segment spans residues 1 to 3 (GIV). Residues 4–13 (RYTKMKTATN) are Cytoplasmic-facing. A helical transmembrane segment spans residues 14–38 (IYIFNLALADALATSTLPFQSAKYL). Over 39 to 50 (METWPFGELLCK) the chain is Extracellular. An intrachain disulfide couples Cys-49 to Cys-126. The chain crosses the membrane as a helical span at residues 51–72 (AVLSIDYYNMFTSIFTLTMMSV). At 73-91 (DRYIAVCHPVKALDFRTPA) the chain is on the cytoplasmic side. Residues 92–114 (KAKLINICIWVLASGVGVPIMVM) traverse the membrane as a helical segment. At 115–134 (AVTRPRDGAVVCMLQFPSPS) the chain is on the extracellular side. A helical membrane pass occupies residues 135–166 (WYWDTVTKICVFLFAFVVPILVITVCYGLMLL). Topologically, residues 167–189 (RLRSVRLLSGSKEKDRSLRRITR) are cytoplasmic. The helical transmembrane segment at 190–212 (MVLVVVGAFVVCWAPIHIFVIVW) threads the bilayer. The Extracellular segment spans residues 213-227 (TLVDIDRRDPLVVAA).

The protein belongs to the G-protein coupled receptor 1 family. May form homooligomers. Forms a heterodimer with OPRM1. Interacts with GPRASP1. Interacts with RTP4; the interaction promotes cell surface localization of the OPRD1-OPRM1 heterodimer. Ubiquitinated. A basal ubiquitination seems not to be related to degradation. Ubiquitination is increased upon formation of OPRM1:OPRD1 oligomers leading to proteasomal degradation; the ubiquitination is diminished by RTP4. Detected in myenteric plexus and smooth muscle (at protein level). Detected in brain and intestine.

The protein localises to the cell membrane. Functionally, G-protein coupled receptor that functions as a receptor for endogenous enkephalins and for a subset of other opioids. Ligand binding causes a conformation change that triggers signaling via guanine nucleotide-binding proteins (G proteins) and modulates the activity of down-stream effectors, such as adenylate cyclase. Signaling leads to the inhibition of adenylate cyclase activity. Inhibits neurotransmitter release by reducing calcium ion currents and increasing potassium ion conductance. Plays a role in the perception of pain and in opiate-mediated analgesia. Plays a role in developing analgesic tolerance to morphine. The polypeptide is Delta-type opioid receptor (OPRD1) (Sus scrofa (Pig)).